The following is a 334-amino-acid chain: Non-functional pseudokinase ZED1 (334 aa).

Residues 49 to 334 enclose the Protein kinase domain; sequence FSESRIISSW…KELKLIEKLS (286 aa). ATP is bound by residues 55–63 and K76; that span reads ISSWGYFIW. 2 positions are modified to O-acetylthreonine: T125 and T177.

The protein belongs to the protein kinase superfamily. Ser/Thr protein kinase family. ZRK subfamily. As to quaternary structure, interacts with RPP13L4/ZAR1. Component of an immune signaling complex made of, at least, SZE1, BKN2/SZE2, ZAR1 and ZED1. Binds directly to SZE1 at the plasma membrane. In terms of tissue distribution, expressed in seedlings, young leaves, floral organs, shoot apical meristems (SAM) and inflorescence stems.

The protein localises to the cytoplasm. Its subcellular location is the cytosol. It localises to the nucleus. The protein resides in the cell membrane. Functionally, together with RPP13L4/ZAR1, involved in the ambient temperature (above 22 degrees Celsius)-sensitive aerial organ development. Together with RPP13L4/ZAR1, involved in the regulation of the ambient temperature-sensitive intersection of growth and immune response in the absence of pathogens, by repressing the transcription of SNC1. Probable non-functional kinase required for recognition of the Pseudomonas syringae type III effector HopZ1a by RPP13L4/ZAR1 and, together with SZE1 and SZE2, to trigger subsequent defense responses. May function as a decoy to trap HopZ1a in the ZAR1 complex for recognition by the plant immune system. This Arabidopsis thaliana (Mouse-ear cress) protein is Non-functional pseudokinase ZED1.